Consider the following 507-residue polypeptide: Maturase K (507 aa).

It belongs to the intron maturase 2 family. MatK subfamily.

The protein localises to the plastid. The protein resides in the chloroplast. Functionally, usually encoded in the trnK tRNA gene intron. Probably assists in splicing its own and other chloroplast group II introns. This Annona muricata (Soursop) protein is Maturase K.